We begin with the raw amino-acid sequence, 60 residues long: Large ribosomal subunit protein bL32B (60 aa).

Residues 1 to 19 (MAVPKRKMSRANTRHRRSQ) are compositionally biased toward basic residues. A disordered region spans residues 1-20 (MAVPKRKMSRANTRHRRSQW).

It belongs to the bacterial ribosomal protein bL32 family.

This is Large ribosomal subunit protein bL32B from Saccharopolyspora erythraea (strain ATCC 11635 / DSM 40517 / JCM 4748 / NBRC 13426 / NCIMB 8594 / NRRL 2338).